The primary structure comprises 201 residues: Recombination protein RecR (201 aa).

The segment at 60–75 adopts a C4-type zinc-finger fold; it reads CATCGNFDTVQPCAVC. In terms of domain architecture, Toprim spans 83–178; the sequence is GIICVVEDVP…DVTRLAHGVP (96 aa).

It belongs to the RecR family.

Functionally, may play a role in DNA repair. It seems to be involved in an RecBC-independent recombinational process of DNA repair. It may act with RecF and RecO. The polypeptide is Recombination protein RecR (Hyphomonas neptunium (strain ATCC 15444)).